The chain runs to 132 residues: Antimicrobial protein Ace-AMP1 (132 aa).

An N-terminal signal peptide occupies residues 1–27; sequence MVRVVSLLAASTFILLIMIISSPYANS. 4 cysteine pairs are disulfide-bonded: cysteine 31–cysteine 76, cysteine 41–cysteine 54, cysteine 55–cysteine 100, and cysteine 74–cysteine 116.

The protein belongs to the plant LTP family. Highly divergent. In terms of assembly, monomer.

Its function is as follows. Antifungal and antibacterial activity against the Gram-positive bacteria B.megaterium and S.lutea. This Allium cepa (Onion) protein is Antimicrobial protein Ace-AMP1.